The sequence spans 491 residues: Glycogen synthase (491 aa).

Residue lysine 15 participates in ADP-alpha-D-glucose binding.

The protein belongs to the glycosyltransferase 1 family. Bacterial/plant glycogen synthase subfamily.

It catalyses the reaction [(1-&gt;4)-alpha-D-glucosyl](n) + ADP-alpha-D-glucose = [(1-&gt;4)-alpha-D-glucosyl](n+1) + ADP + H(+). Its pathway is glycan biosynthesis; glycogen biosynthesis. Synthesizes alpha-1,4-glucan chains using ADP-glucose. This Treponema denticola (strain ATCC 35405 / DSM 14222 / CIP 103919 / JCM 8153 / KCTC 15104) protein is Glycogen synthase.